Consider the following 158-residue polypeptide: Phosphopantetheine adenylyltransferase (158 aa).

The protein belongs to the eukaryotic CoaD family.

It is found in the cytoplasm. It carries out the reaction (R)-4'-phosphopantetheine + ATP + H(+) = 3'-dephospho-CoA + diphosphate. It functions in the pathway cofactor biosynthesis; coenzyme A biosynthesis. In terms of biological role, reversibly transfers an adenylyl group from ATP to 4'-phosphopantetheine, yielding dephospho-CoA (dPCoA) and pyrophosphate. This is Phosphopantetheine adenylyltransferase from Pyrococcus horikoshii (strain ATCC 700860 / DSM 12428 / JCM 9974 / NBRC 100139 / OT-3).